The sequence spans 508 residues: Replication factor C large subunit (508 aa).

Residue 43-50 participates in ATP binding; that stretch reads GSPGIGKT. Residues 425–508 form a disordered region; the sequence is AVEHSGGVFE…DQQSGLSDFM (84 aa). Composition is skewed to acidic residues over residues 443 to 461 and 483 to 500; these read GDSDADGDAPDTDAGEESG and TTDDETETASEAAEDDDQ.

Belongs to the activator 1 small subunits family. RfcL subfamily. Heteromultimer composed of small subunits (RfcS) and large subunits (RfcL).

Part of the RFC clamp loader complex which loads the PCNA sliding clamp onto DNA. In Haloarcula marismortui (strain ATCC 43049 / DSM 3752 / JCM 8966 / VKM B-1809) (Halobacterium marismortui), this protein is Replication factor C large subunit.